We begin with the raw amino-acid sequence, 140 residues long: uncharacterized protein (140 aa).

The protein belongs to the MG067/MG068/MG395 family.

This is an uncharacterized protein from Mycoplasma pneumoniae (strain ATCC 29342 / M129 / Subtype 1) (Mycoplasmoides pneumoniae).